A 134-amino-acid polypeptide reads, in one-letter code: Lymphocyte antigen 6 complex locus protein G6d (134 aa).

A signal peptide spans 1 to 19; that stretch reads MNSQLIGILFSALLGAALG. Positions 22-121 constitute a UPAR/Ly6 domain; the sequence is MRCYDCGGGP…ASSSTPLCIL (100 aa). Intrachain disulfides connect Cys24-Cys48, Cys27-Cys35, Cys42-Cys76, Cys82-Cys101, and Cys102-Cys107. Residue Thr68 is glycosylated (O-linked (GalNAc...) threonine). A lipid anchor (GPI-anchor amidated asparagine) is attached at Asn108. Residues 109 to 134 constitute a propeptide, removed in mature form; it reads GAVASSSTPLCILAAVTTLAWLLSGQ.

Homodimer. O-glycosylated.

It localises to the cell membrane. The polypeptide is Lymphocyte antigen 6 complex locus protein G6d (Ly6g6d) (Rattus norvegicus (Rat)).